The primary structure comprises 896 residues: Translation initiation factor IF-2 (896 aa).

The span at 117–174 (AEAEAKAKAEAEAKAKVDAEAKVKAKAEAEAKAKAKVQTEKPAAETAEDKAAKAEEAK) shows a compositional bias: basic and acidic residues. Residues 117–303 (AEAEAKAKAE…TRSVAPESMD (187 aa)) are disordered. Positions 175-195 (LLAAQDAVAKAKANEEASAAA) are enriched in low complexity. Positions 196–227 (DEARRLAEENEKRWAEEEKARKEAEKSVDHHV) are enriched in basic and acidic residues. A compositionally biased stretch (low complexity) spans 254–268 (PSANAGNNANANAGA). Positions 396-563 (PRAPVVTIMG…GILLEAEVLE (168 aa)) constitute a tr-type G domain. Positions 405–412 (GHVDHGKT) are G1. 405-412 (GHVDHGKT) is a binding site for GTP. Positions 430–434 (GITQH) are G2. The G3 stretch occupies residues 451-454 (DTPG). GTP-binding positions include 451–455 (DTPGH) and 505–508 (NKID). The tract at residues 505-508 (NKID) is G4. Residues 541-543 (SAK) form a G5 region.

It belongs to the TRAFAC class translation factor GTPase superfamily. Classic translation factor GTPase family. IF-2 subfamily.

It is found in the cytoplasm. One of the essential components for the initiation of protein synthesis. Protects formylmethionyl-tRNA from spontaneous hydrolysis and promotes its binding to the 30S ribosomal subunits. Also involved in the hydrolysis of GTP during the formation of the 70S ribosomal complex. The chain is Translation initiation factor IF-2 from Shewanella pealeana (strain ATCC 700345 / ANG-SQ1).